A 204-amino-acid chain; its full sequence is Holliday junction branch migration complex subunit RuvA (204 aa).

The segment at 1–64 (MIGRLRGIIL…EDAQLLFGFN (64 aa)) is domain I. Residues 65–143 (SKPERALFRE…GMHGDLFASD (79 aa)) are domain II. The tract at residues 144–155 (APFALTSEMPKE) is flexible linker. The tract at residues 156–204 (TANDAEGEAVAALTALGYKPQEASRMIVKVGKPDADCETLIREALRAAI) is domain III.

This sequence belongs to the RuvA family. As to quaternary structure, homotetramer. Forms an RuvA(8)-RuvB(12)-Holliday junction (HJ) complex. HJ DNA is sandwiched between 2 RuvA tetramers; dsDNA enters through RuvA and exits via RuvB. An RuvB hexamer assembles on each DNA strand where it exits the tetramer. Each RuvB hexamer is contacted by two RuvA subunits (via domain III) on 2 adjacent RuvB subunits; this complex drives branch migration. In the full resolvosome a probable DNA-RuvA(4)-RuvB(12)-RuvC(2) complex forms which resolves the HJ.

The protein resides in the cytoplasm. Its function is as follows. The RuvA-RuvB-RuvC complex processes Holliday junction (HJ) DNA during genetic recombination and DNA repair, while the RuvA-RuvB complex plays an important role in the rescue of blocked DNA replication forks via replication fork reversal (RFR). RuvA specifically binds to HJ cruciform DNA, conferring on it an open structure. The RuvB hexamer acts as an ATP-dependent pump, pulling dsDNA into and through the RuvAB complex. HJ branch migration allows RuvC to scan DNA until it finds its consensus sequence, where it cleaves and resolves the cruciform DNA. This chain is Holliday junction branch migration complex subunit RuvA, found in Erwinia tasmaniensis (strain DSM 17950 / CFBP 7177 / CIP 109463 / NCPPB 4357 / Et1/99).